The following is a 374-amino-acid chain: MPPKQAPSKKAENKRKEKVIEDKTFGLKNKKGNKNQKFVAQIENQVRNNNTRMDLVRQQEAAKKKEKDELLDIQNLLKPVEQKVAKDVDPKSLLCVFFKQGLCGKGAKCKFSHDLAVAQKTAKKNLYADSREVEKDETNENWDKEKLDEVVNKKNKGGHVIDIVCKYFLEAVENNKYGWFWECPNGGDKCQYRHCLPEGYVLKKDRKAMEAQKEDEISIEELVEKERAALNSKDLTKLTLQTFVAWKKKKLKERKEKEEADLKAKKEKIKSGKHNGMSGRDLFLFDANLINNDDDEAGDIEMEKEEVDENEKVFEIDANFFKFDGMDDELTNQMSNSTAAVSSVAGAVAKMDINEDLFDIDEDVGDLDSDSDED.

2 C3H1-type zinc fingers span residues 89 to 116 (DPKS…HDLA) and 167 to 197 (YFLE…HCLP).

This sequence belongs to the ZC3H15/TMA46 family.

The protein is Zinc finger CCCH domain-containing protein 15 homolog of Caenorhabditis briggsae.